A 571-amino-acid chain; its full sequence is Streptolysin O (571 aa).

Residues 1–33 form the signal peptide; the sequence is MSNKKTFKKYSRVAGLLTVALIIGNLVTANAES. Disordered regions lie at residues 32–56 and 81–108; these read ESNK…ESSE and KEMP…HTEE. Low complexity predominate over residues 37–48; that stretch reads NTASTETTTTNE. The next 4 membrane-spanning stretches (beta stranded) occupy residues 260-273, 280-289, 358-367, and 375-387; these read KSQI…NSKI, IDFKSISKGE, SNDVEAAFSA, and KTNG…LENS. The Conserved undecapeptide motif lies at 529–539; the sequence is ECTGLAWEWWR. Position 561 (Thr561) is a short sequence motif, cholesterol binding.

Belongs to the cholesterol-dependent cytolysin family. As to quaternary structure, homooligomeric pore complex of 35 to 50 subunits; when inserted in the host membrane.

The protein resides in the secreted. It localises to the host cell membrane. Functionally, a cholesterol-dependent toxin that causes cytolysis by forming pores in cholesterol containing host membranes. After binding to target membranes, the protein undergoes a major conformation change, leading to its insertion in the host membrane and formation of an oligomeric pore complex. Cholesterol is required for binding to host membranes, membrane insertion and pore formation; cholesterol binding is mediated by a Thr-Leu pair in the C-terminus. Can be reversibly inactivated by oxidation. The chain is Streptolysin O (slo) from Streptococcus pyogenes serotype M6 (strain ATCC BAA-946 / MGAS10394).